Consider the following 112-residue polypeptide: Cell cycle protein GpsB (112 aa).

A coiled-coil region spans residues 38 to 72 (IKDYEAFHKEFEQLKQQNARLKRELEEQKLAATQV).

Belongs to the GpsB family. In terms of assembly, forms polymers through the coiled coil domains. Interacts with PBP1, MreC and EzrA.

The protein localises to the cytoplasm. Its function is as follows. Divisome component that associates with the complex late in its assembly, after the Z-ring is formed, and is dependent on DivIC and PBP2B for its recruitment to the divisome. Together with EzrA, is a key component of the system that regulates PBP1 localization during cell cycle progression. Its main role could be the removal of PBP1 from the cell pole after pole maturation is completed. Also contributes to the recruitment of PBP1 to the division complex. Not essential for septum formation. The protein is Cell cycle protein GpsB of Bacillus anthracis (strain A0248).